The sequence spans 55 residues: Large ribosomal subunit protein bL33 (55 aa).

It belongs to the bacterial ribosomal protein bL33 family.

This Yersinia enterocolitica serotype O:8 / biotype 1B (strain NCTC 13174 / 8081) protein is Large ribosomal subunit protein bL33.